Here is a 76-residue protein sequence, read N- to C-terminus: MAVEKFETALKKLEEVVKKLEGGELSLEDSLKAFEEGIKQAAFCSKKLNEAEKRVEVLLKQKDGRFITEQFQPEDE.

It belongs to the XseB family. In terms of assembly, heterooligomer composed of large and small subunits.

Its subcellular location is the cytoplasm. It catalyses the reaction Exonucleolytic cleavage in either 5'- to 3'- or 3'- to 5'-direction to yield nucleoside 5'-phosphates.. In terms of biological role, bidirectionally degrades single-stranded DNA into large acid-insoluble oligonucleotides, which are then degraded further into small acid-soluble oligonucleotides. This chain is Exodeoxyribonuclease 7 small subunit, found in Geotalea daltonii (strain DSM 22248 / JCM 15807 / FRC-32) (Geobacter daltonii).